The following is a 418-amino-acid chain: L-rhamnose isomerase (418 aa).

The Mn(2+) site is built by His261, Asp293, and Asp295.

It belongs to the rhamnose isomerase family. It depends on Mn(2+) as a cofactor.

It localises to the cytoplasm. It catalyses the reaction L-rhamnopyranose = L-rhamnulose. Its pathway is carbohydrate degradation; L-rhamnose degradation; glycerone phosphate from L-rhamnose: step 1/3. Catalyzes the interconversion of L-rhamnose and L-rhamnulose. In Clostridium beijerinckii (strain ATCC 51743 / NCIMB 8052) (Clostridium acetobutylicum), this protein is L-rhamnose isomerase.